The chain runs to 236 residues: MRFNPPLEEARLIRRYKRFLTDIETVTGELLTIHCPNTGSMLNCMVEGGQVWFSRSNDPKRKLPGTWEIAETPQGRLACVNTARANQLVEEALLAGVITELNGFTALKREVPYGQEKSRIDFRLDYPDGAAYVEVKSVTLGFDGSAVAAFPDAVTQRGAKHLRELAHLARQGVRAVQLYCVNLSGIDAVRPAVEIDAAYAAALREAKSAGVEVLAYGVRVTSEEICVDRRLDVLLD.

The protein belongs to the SfsA family.

The polypeptide is Sugar fermentation stimulation protein homolog (Pseudomonas fluorescens (strain SBW25)).